The sequence spans 560 residues: DNA ligase B (560 aa).

Residue Lys124 is the N6-AMP-lysine intermediate of the active site.

It belongs to the NAD-dependent DNA ligase family. LigB subfamily.

It carries out the reaction NAD(+) + (deoxyribonucleotide)n-3'-hydroxyl + 5'-phospho-(deoxyribonucleotide)m = (deoxyribonucleotide)n+m + AMP + beta-nicotinamide D-nucleotide.. In terms of biological role, catalyzes the formation of phosphodiester linkages between 5'-phosphoryl and 3'-hydroxyl groups in double-stranded DNA using NAD as a coenzyme and as the energy source for the reaction. This Escherichia coli O139:H28 (strain E24377A / ETEC) protein is DNA ligase B.